Consider the following 205-residue polypeptide: Small ribosomal subunit protein uS5 (205 aa).

An S5 DRBM domain is found at 49-112; the sequence is LEDEVLDIAM…TKAKMNLVKV (64 aa).

Belongs to the universal ribosomal protein uS5 family. Part of the 30S ribosomal subunit. Contacts protein S4.

In terms of biological role, with S4 and S12 plays an important role in translational accuracy. This Methanoregula boonei (strain DSM 21154 / JCM 14090 / 6A8) protein is Small ribosomal subunit protein uS5.